A 467-amino-acid chain; its full sequence is Multiple inositol polyphosphate phosphatase 1 (467 aa).

An N-terminal signal peptide occupies residues 1–15 (MRLLILLLLPLVAIA). His67 is a catalytic residue. N-linked (GlcNAc...) asparagine glycosylation is found at Asn120, Asn159, and Asn234. The GPI-anchor amidated glycine moiety is linked to residue Gly441. Positions 442 to 467 (GAPSLGSGVGGLLATTLAAMLVYLMH) are cleaved as a propeptide — removed in mature form.

It belongs to the histidine acid phosphatase family. MINPP1 subfamily. In terms of processing, N-glycosylated.

The protein localises to the cell membrane. The protein resides in the apical cell membrane. It is found in the basolateral cell membrane. Its subcellular location is the cell projection. It localises to the filopodium. The protein localises to the cell junction. The enzyme catalyses (2R)-2,3-bisphosphoglycerate + H2O = (2R)-2-phosphoglycerate + phosphate. It catalyses the reaction 1D-myo-inositol hexakisphosphate + H2O = 1D-myo-inositol 1,2,4,5,6-pentakisphosphate + phosphate. It carries out the reaction 1D-myo-inositol 1,2,4,5,6-pentakisphosphate + H2O = 1D-myo-inositol 1,2,5,6-tetrakisphosphate + phosphate. The catalysed reaction is 1D-myo-inositol 1,2,5,6-tetrakisphosphate + H2O = 1D-myo-inositol 1,2,6-trisphosphate + phosphate. Its function is as follows. Probable multiple inositol polyphosphate phosphatase that hydrolyzes 1D-myo-inositol 1,3,4,5,6-pentakisphosphate (InsP5[2OH]) and 1D-myo-inositol hexakisphosphate (InsP6) to a range of less phosphorylated inositol phosphates. This regulates the availability of these various small molecule second messengers and metal chelators which control many aspects of cell physiology. May have a dual substrate specificity, and function as a 2,3-bisphosphoglycerate 3-phosphatase hydrolyzing 2,3-bisphosphoglycerate to 2-phosphoglycerate. 2,3-bisphosphoglycerate (BPG) is formed as part of the Rapoport-Luebering glycolytic bypass. Has a role in embryonic tracheal development where it localizes to the leading edge of actively migrating branches. In these leading cells, enhances formation and/or maintenance of filopodia which may drive branch migration and elongation by cell-cell intercalation. The function in tracheal morphogenesis is dependent on its inositol polyphosphate phosphatase activity. The polypeptide is Multiple inositol polyphosphate phosphatase 1 (Drosophila melanogaster (Fruit fly)).